We begin with the raw amino-acid sequence, 485 residues long: Proline--tRNA ligase (485 aa).

It belongs to the class-II aminoacyl-tRNA synthetase family. ProS type 3 subfamily. As to quaternary structure, homodimer.

The protein resides in the cytoplasm. The catalysed reaction is tRNA(Pro) + L-proline + ATP = L-prolyl-tRNA(Pro) + AMP + diphosphate. Catalyzes the attachment of proline to tRNA(Pro) in a two-step reaction: proline is first activated by ATP to form Pro-AMP and then transferred to the acceptor end of tRNA(Pro). This is Proline--tRNA ligase from Aeropyrum pernix (strain ATCC 700893 / DSM 11879 / JCM 9820 / NBRC 100138 / K1).